A 46-amino-acid polypeptide reads, in one-letter code: Small polypeptide DEVIL 5 (46 aa).

Residues 8–24 (VGGTKRKMWSRGVGGVV) form a helical membrane-spanning segment. A required for DVL/RTFL small polypeptide activity region spans residues 15 to 46 (MWSRGVGGVVREQKAKLYIIRRCVVMLLCWHD).

This sequence belongs to the DVL/RTFL small polypeptides family. As to expression, mostly expressed in roots and flowers, and, to a lower extent, in leaves and stems.

It is found in the cell membrane. Small polypeptide acting as a regulatory molecule which coordinates cellular responses required for differentiation, growth and development, including leaves shape, pedicule elongation, inflorescence organization and fruit maturation, probably by restricting polar cell proliferation in lateral organs and coordinating socket cell recruitment and differentiation at trichome sites. This is Small polypeptide DEVIL 5 from Arabidopsis thaliana (Mouse-ear cress).